The chain runs to 306 residues: Ornithine carbamoyltransferase (306 aa).

Carbamoyl phosphate contacts are provided by residues 53–56, Gln-80, Arg-104, and 131–134; these read STRT and HPCQ. L-ornithine contacts are provided by residues Asn-162, Asp-220, and 224-225; that span reads SM. Carbamoyl phosphate-binding positions include 260–261 and Arg-288; that span reads CL.

This sequence belongs to the aspartate/ornithine carbamoyltransferase superfamily. OTCase family.

The protein resides in the cytoplasm. It catalyses the reaction carbamoyl phosphate + L-ornithine = L-citrulline + phosphate + H(+). Its pathway is amino-acid biosynthesis; L-arginine biosynthesis; L-arginine from L-ornithine and carbamoyl phosphate: step 1/3. Reversibly catalyzes the transfer of the carbamoyl group from carbamoyl phosphate (CP) to the N(epsilon) atom of ornithine (ORN) to produce L-citrulline. The polypeptide is Ornithine carbamoyltransferase (Dechloromonas aromatica (strain RCB)).